The chain runs to 73 residues: MDIKEEAIETEGIVKESLPNTMFRVELKNKHIVLAHLSGKMRKHFIKIVPGDKVKVELSPYDLTKGRIVYREK.

The region spanning 1-73 (MDIKEEAIET…TKGRIVYREK (73 aa)) is the S1-like domain.

It belongs to the IF-1 family. Component of the 30S ribosomal translation pre-initiation complex which assembles on the 30S ribosome in the order IF-2 and IF-3, IF-1 and N-formylmethionyl-tRNA(fMet); mRNA recruitment can occur at any time during PIC assembly.

The protein resides in the cytoplasm. One of the essential components for the initiation of protein synthesis. Stabilizes the binding of IF-2 and IF-3 on the 30S subunit to which N-formylmethionyl-tRNA(fMet) subsequently binds. Helps modulate mRNA selection, yielding the 30S pre-initiation complex (PIC). Upon addition of the 50S ribosomal subunit IF-1, IF-2 and IF-3 are released leaving the mature 70S translation initiation complex. The sequence is that of Translation initiation factor IF-1 from Borreliella afzelii (strain PKo) (Borrelia afzelii).